The chain runs to 297 residues: Magnetosome protein MamB (297 aa).

The Cytoplasmic portion of the chain corresponds to 1-12; the sequence is MKFENCRDCREE. Residues 1 to 214 are transmembrane domain (TMD); the sequence is MKFENCRDCR…GLMDSSVDTE (214 aa). Residues 13-33 traverse the membrane as a helical segment; sequence VVWWAFTADICMTLFKGILGL. The Lumenal portion of the chain corresponds to 34–83; sequence MSGSVALVADSLHSGADVVASGVTQLSLKISNKPADERYPFGYGNIQYIS. Residues 84-104 form a helical membrane-spanning segment; the sequence is SAIVGSLLLIGASFLMYGSVV. The Cytoplasmic segment spans residues 105-112; it reads KLISGTYE. A helical transmembrane segment spans residues 113–133; the sequence is APSIFAALGASVTVIVNELMY. The Lumenal segment spans residues 134-164; that stretch reads RYQICVGNENNSPAIIANAWDNRSDAISSAA. A helical membrane pass occupies residues 165–185; sequence VMVGVIASVIGFPIADTIAAI. At 186–297 the chain is on the cytoplasmic side; it reads GVSALVGHIG…PAPAAVTVRV (112 aa). The tract at residues 215–297 is C-terminal domain (CTD); sequence LLQTAWQIAT…PAPAAVTVRV (83 aa).

It belongs to the cation diffusion facilitator (CDF) transporter (TC 2.A.4) family. As to quaternary structure, forms homodimers via its C-terminal domain, may form higher order multimers that are sensitive to reducing agent. Probably interacts with MamE. Interacts with MamM via their C-terminal domains.

It is found in the cell inner membrane. Its subcellular location is the magnetosome membrane. Functionally, plays a dual, essential role in magnetosome formation; required for magnetosome vesicle formation as well as biomineralization. Requires heterodimerization with MamM for stability. Probably binds and transports iron. One of 7 genes (mamLQBIEMO) able to induce magnetosome membrane biogenesis; coexpression of mamLQRBIEMO in a deletion of the 17 gene mamAB operon restores magnetosome vesicle formation but not magnetite biosynthesis. This Magnetospirillum gryphiswaldense (strain DSM 6361 / JCM 21280 / NBRC 15271 / MSR-1) protein is Magnetosome protein MamB.